The primary structure comprises 202 residues: Imidazoleglycerol-phosphate dehydratase (202 aa).

This sequence belongs to the imidazoleglycerol-phosphate dehydratase family.

It localises to the cytoplasm. The enzyme catalyses D-erythro-1-(imidazol-4-yl)glycerol 3-phosphate = 3-(imidazol-4-yl)-2-oxopropyl phosphate + H2O. It functions in the pathway amino-acid biosynthesis; L-histidine biosynthesis; L-histidine from 5-phospho-alpha-D-ribose 1-diphosphate: step 6/9. The chain is Imidazoleglycerol-phosphate dehydratase from Acinetobacter baylyi (strain ATCC 33305 / BD413 / ADP1).